Here is a 350-residue protein sequence, read N- to C-terminus: Homeobox-leucine zipper protein HOX5 (350 aa).

Positions 83–142 (APEKKRRLTAEQVQMLERSFEEENKLEPERKTELARRLGMAPRQVAVWFQNRRARWKTKQ) form a DNA-binding region, homeobox. The tract at residues 141–185 (KQLEHDFDRLKAAYDALAADHHALLSDNDRLRAQVISLTEKLQDK) is leucine-zipper. The segment at 180–254 (EKLQDKETSP…TNDDGDGGGA (75 aa)) is disordered. Residues 188–198 (SPSSATITTAA) show a composition bias toward low complexity.

Belongs to the HD-ZIP homeobox family. Class I subfamily. As to quaternary structure, homodimer. May form a heterodimer with HOX4. In terms of tissue distribution, expressed in seedlings, roots, leaves, nodes, internodes, flowers and embryo.

The protein resides in the nucleus. Its function is as follows. Probable transcription activator that binds to the DNA sequence 5'-CAAT[AT]ATTG-3'. This Oryza sativa subsp. indica (Rice) protein is Homeobox-leucine zipper protein HOX5 (HOX5).